A 222-amino-acid chain; its full sequence is Cytidylate kinase (222 aa).

Residue 11–19 (GPTASGKGT) participates in ATP binding.

This sequence belongs to the cytidylate kinase family. Type 1 subfamily.

It localises to the cytoplasm. The catalysed reaction is CMP + ATP = CDP + ADP. The enzyme catalyses dCMP + ATP = dCDP + ADP. This is Cytidylate kinase from Cupriavidus necator (strain ATCC 17699 / DSM 428 / KCTC 22496 / NCIMB 10442 / H16 / Stanier 337) (Ralstonia eutropha).